We begin with the raw amino-acid sequence, 366 residues long: S-adenosylmethionine:tRNA ribosyltransferase-isomerase (366 aa).

It belongs to the QueA family. As to quaternary structure, monomer.

The protein resides in the cytoplasm. It catalyses the reaction 7-aminomethyl-7-carbaguanosine(34) in tRNA + S-adenosyl-L-methionine = epoxyqueuosine(34) in tRNA + adenine + L-methionine + 2 H(+). The protein operates within tRNA modification; tRNA-queuosine biosynthesis. Functionally, transfers and isomerizes the ribose moiety from AdoMet to the 7-aminomethyl group of 7-deazaguanine (preQ1-tRNA) to give epoxyqueuosine (oQ-tRNA). This Bradyrhizobium diazoefficiens (strain JCM 10833 / BCRC 13528 / IAM 13628 / NBRC 14792 / USDA 110) protein is S-adenosylmethionine:tRNA ribosyltransferase-isomerase.